A 450-amino-acid polypeptide reads, in one-letter code: Phosphoglucosamine mutase (450 aa).

The active-site Phosphoserine intermediate is the Ser-102. Ser-102, Asp-244, Asp-246, and Asp-248 together coordinate Mg(2+). The residue at position 102 (Ser-102) is a Phosphoserine.

Belongs to the phosphohexose mutase family. It depends on Mg(2+) as a cofactor. In terms of processing, activated by phosphorylation.

The enzyme catalyses alpha-D-glucosamine 1-phosphate = D-glucosamine 6-phosphate. Its function is as follows. Catalyzes the conversion of glucosamine-6-phosphate to glucosamine-1-phosphate. This Nitratidesulfovibrio vulgaris (strain ATCC 29579 / DSM 644 / CCUG 34227 / NCIMB 8303 / VKM B-1760 / Hildenborough) (Desulfovibrio vulgaris) protein is Phosphoglucosamine mutase.